The sequence spans 211 residues: Guanylate kinase (211 aa).

One can recognise a Guanylate kinase-like domain in the interval 7–187; the sequence is GLLIILSGPS…AADRIIAIIR (181 aa). An ATP-binding site is contributed by 14-21; it reads GPSGVGKA.

The protein belongs to the guanylate kinase family.

It localises to the cytoplasm. The enzyme catalyses GMP + ATP = GDP + ADP. In terms of biological role, essential for recycling GMP and indirectly, cGMP. This Aster yellows witches'-broom phytoplasma (strain AYWB) protein is Guanylate kinase.